A 466-amino-acid polypeptide reads, in one-letter code: Trigger factor (466 aa).

Positions 166–245 constitute a PPIase FKBP-type domain; that stretch reads GDFAQIDLVA…LNAVKERELP (80 aa). 2 disordered regions span residues 313–332 and 424–466; these read LEQE…TESS and LPDD…AADK. Residues 426–444 show a composition bias toward acidic residues; it reads DDGEAVDEDATPEDTDAPA. Residues 453 to 466 show a composition bias toward basic residues; that stretch reads PKKKAAAKKKAADK.

The protein belongs to the FKBP-type PPIase family. Tig subfamily.

The protein resides in the cytoplasm. The enzyme catalyses [protein]-peptidylproline (omega=180) = [protein]-peptidylproline (omega=0). Its function is as follows. Involved in protein export. Acts as a chaperone by maintaining the newly synthesized protein in an open conformation. Functions as a peptidyl-prolyl cis-trans isomerase. This Leifsonia xyli subsp. xyli (strain CTCB07) protein is Trigger factor.